The sequence spans 332 residues: Ferredoxin--NADP reductase (332 aa).

Residues threonine 20, glutamate 39, glutamine 47, tyrosine 52, valine 92, phenylalanine 126, aspartate 288, and serine 329 each coordinate FAD.

This sequence belongs to the ferredoxin--NADP reductase type 2 family. As to quaternary structure, homodimer. FAD serves as cofactor.

It carries out the reaction 2 reduced [2Fe-2S]-[ferredoxin] + NADP(+) + H(+) = 2 oxidized [2Fe-2S]-[ferredoxin] + NADPH. The protein is Ferredoxin--NADP reductase of Geobacillus thermodenitrificans (strain NG80-2).